Reading from the N-terminus, the 122-residue chain is MSMASSSSSSLLAMAVLAALFAGAWCVPKVTFTVEKGSNEKHLAVLVKYEGDTMAEVELREHGSDEWVAMTKGEGGVWTFDSEEPLQGPFNFRFLTEKGMKNVFDDVVPEKYTIGATYAPEE.

The first 26 residues, 1–26, serve as a signal peptide directing secretion; sequence MSMASSSSSSLLAMAVLAALFAGAWC. One can recognise an Expansin-like CBD domain in the interval 41 to 120; that stretch reads KHLAVLVKYE…KYTIGATYAP (80 aa).

The protein belongs to the expansin family. Expansin B subfamily. Pollen specific.

Its subcellular location is the secreted. The protein is Pollen allergen Phl p 2 (PHLPII) of Phleum pratense (Common timothy).